A 130-amino-acid polypeptide reads, in one-letter code: Insulin-like growth factor 1 (130 aa).

The signal sequence occupies residues 1–25 (MHAVSSSHLFYLAFCLLVLTSSATA). Residues 26-54 (GPETLCGAELVDALQFVCGDRGFYFNKPT) form a b region. Intrachain disulfides connect C31-C73, C43-C86, and C72-C77. A c region spans residues 55 to 66 (GYGSSSRRAPQT). Residues 67-87 (GIVDECCFRSCDLRRLEMYCA) are a. Residues 88-95 (PLKPAKSA) form a d region. Positions 96–130 (RSVRAQRHTDMPKTQKEVHLKNASRGSAGNKNYRM) are cleaved as a propeptide — e peptide. The interval 97–130 (SVRAQRHTDMPKTQKEVHLKNASRGSAGNKNYRM) is disordered. Basic and acidic residues predominate over residues 102-115 (RHTDMPKTQKEVHL). Residues 119 to 130 (SRGSAGNKNYRM) show a composition bias toward polar residues.

It belongs to the insulin family. Forms a ternary complex with IGFR1 and ITGAV:ITGB3. Forms a ternary complex with IGFR1 and ITGA6:ITGB4. Forms a ternary complex with IGFBP3 and ALS.

It localises to the secreted. Functionally, the insulin-like growth factors, isolated from plasma, are structurally and functionally related to insulin but have a much higher growth-promoting activity. May be a physiological regulator of [1-14C]-2-deoxy-D-glucose (2DG) transport and glycogen synthesis in osteoblasts. Stimulates glucose transport in bone-derived osteoblastic (PyMS) cells and is effective at much lower concentrations than insulin, not only regarding glycogen and DNA synthesis but also with regard to enhancing glucose uptake. May play a role in synapse maturation. Ca(2+)-dependent exocytosis of IGF1 is required for sensory perception of smell in the olfactory bulb. Acts as a ligand for IGF1R. Binds to the alpha subunit of IGF1R, leading to the activation of the intrinsic tyrosine kinase activity which autophosphorylates tyrosine residues in the beta subunit thus initiating a cascade of down-stream signaling events leading to activation of the PI3K-AKT/PKB and the Ras-MAPK pathways. Binds to integrins ITGAV:ITGB3 and ITGA6:ITGB4. Its binding to integrins and subsequent ternary complex formation with integrins and IGFR1 are essential for IGF1 signaling. Induces the phosphorylation and activation of IGFR1, MAPK3/ERK1, MAPK1/ERK2 and AKT1. As part of the MAPK/ERK signaling pathway, acts as a negative regulator of apoptosis in cardiomyocytes via promotion of STUB1/CHIP-mediated ubiquitination and degradation of ICER-type isoforms of CREM. This chain is Insulin-like growth factor 1, found in Cavia porcellus (Guinea pig).